The following is a 188-amino-acid chain: Urease accessory protein UreE (188 aa).

The disordered stretch occupies residues 142-174; the sequence is AYQSQAGAGHHHHHDHDHGHSHDHSHTHSHADS. Basic and acidic residues predominate over residues 157–172; sequence HDHGHSHDHSHTHSHA.

This sequence belongs to the UreE family.

The protein resides in the cytoplasm. In terms of biological role, involved in urease metallocenter assembly. Binds nickel. Probably functions as a nickel donor during metallocenter assembly. In Tolumonas auensis (strain DSM 9187 / NBRC 110442 / TA 4), this protein is Urease accessory protein UreE.